The chain runs to 156 residues: 16 kDa phloem protein 1 (156 aa).

Residues 1-108 enclose the C2 domain; the sequence is MAVGILEVSL…LEMGVEKGTA (108 aa). Positions 20, 26, 78, 80, 83, and 86 each coordinate Ca(2+).

The cofactor is Ca(2+).

Its function is as follows. Binds to both sense and antisense RNA. Can also bind sheared DNA and dodecamer DNA with a low affinity. Interacts with mesophyll plasmodesmata to mediate its own cell-to-cell transport and potentiate RNA trafficking. May play a role in plant defense signaling. The sequence is that of 16 kDa phloem protein 1 from Arabidopsis thaliana (Mouse-ear cress).